The primary structure comprises 161 residues: MKELQDIARLSDRFISVELVDESLFDWNVKLHQVDKDSVLWQDMKETNTEFILLNLTFPDNFPFSPPFMRVLSPRLENGYVLDGGAICMELLTPRGWSSAYTVEAVMRQFAASLVKGQGRICRKAGKSKKSFSRKEAEATFKSLVKTHEKYGWVTPPVSDG.

One can recognise a UBC core domain in the interval 1–154; the sequence is MKELQDIARL…VKTHEKYGWV (154 aa). Catalysis depends on C88, which acts as the Glycyl thioester intermediate.

Belongs to the ubiquitin-conjugating enzyme family. In terms of assembly, interacts with FBXW7.

Its subcellular location is the nucleus. The enzyme catalyses S-ubiquitinyl-[E1 ubiquitin-activating enzyme]-L-cysteine + [E2 ubiquitin-conjugating enzyme]-L-cysteine = [E1 ubiquitin-activating enzyme]-L-cysteine + S-ubiquitinyl-[E2 ubiquitin-conjugating enzyme]-L-cysteine.. It participates in protein modification; protein ubiquitination. Probable E2 ubiquitin-protein ligase that catalyzes the covalent attachment of ubiquitin to target proteins. May facilitate the monoubiquitination and degradation of MTOR and CCNE1 through interaction with FBXW7. The protein is Ubiquitin-conjugating enzyme E2Q-like protein 1 (UBE2QL1) of Homo sapiens (Human).